The sequence spans 120 residues: Large ribosomal subunit protein bL20 (120 aa).

This sequence belongs to the bacterial ribosomal protein bL20 family.

Its function is as follows. Binds directly to 23S ribosomal RNA and is necessary for the in vitro assembly process of the 50S ribosomal subunit. It is not involved in the protein synthesizing functions of that subunit. This is Large ribosomal subunit protein bL20 from Novosphingobium aromaticivorans (strain ATCC 700278 / DSM 12444 / CCUG 56034 / CIP 105152 / NBRC 16084 / F199).